We begin with the raw amino-acid sequence, 371 residues long: Cytochrome b (371 aa).

4 helical membrane-spanning segments follow: residues 25 to 45, 69 to 90, 105 to 125, and 170 to 190; these read FGSLLLTCLMLQILTGFFLAI, WIMQNTHAIGASLFFICIYTHI, WLSGTTLLIILMATAFFGYVL, and FFALHFILPFIIISMSSIHII. The heme b site is built by His75 and His89. The heme b site is built by His174 and His188. His193 is an a ubiquinone binding site. 4 helical membrane passes run 218 to 238, 280 to 300, 312 to 332, and 339 to 358; these read YKDMTMVSIMIMLLLMVMTFA, LGGTLALFLSIIILTTTPFTH, LTQILFWTLIATFTTITWTAT, and FIYISQMTSIMYFSFFIMNP.

It belongs to the cytochrome b family. As to quaternary structure, the cytochrome bc1 complex contains 3 respiratory subunits (MT-CYB, CYC1 and UQCRFS1), 2 core proteins (UQCRC1 and UQCRC2) and probably 6 low-molecular weight proteins. Requires heme b as cofactor.

It localises to the mitochondrion inner membrane. Component of the ubiquinol-cytochrome c reductase complex (complex III or cytochrome b-c1 complex) that is part of the mitochondrial respiratory chain. The b-c1 complex mediates electron transfer from ubiquinol to cytochrome c. Contributes to the generation of a proton gradient across the mitochondrial membrane that is then used for ATP synthesis. The chain is Cytochrome b (MT-CYB) from Micruroides euryxanthus (Sonoran coral snake).